The sequence spans 83 residues: Small ribosomal subunit protein eS21 (83 aa).

The protein belongs to the eukaryotic ribosomal protein eS21 family. Component of the 40S small ribosomal subunit.

Its subcellular location is the cytoplasm. It is found in the cytosol. The protein localises to the rough endoplasmic reticulum. Its function is as follows. Component of the small ribosomal subunit. The ribosome is a large ribonucleoprotein complex responsible for the synthesis of proteins in the cell. This chain is Small ribosomal subunit protein eS21 (rps21), found in Ictalurus punctatus (Channel catfish).